We begin with the raw amino-acid sequence, 737 residues long: 1,4-alpha-glucan branching enzyme GlgB (737 aa).

Residue Asp399 is the Nucleophile of the active site. Glu452 acts as the Proton donor in catalysis.

This sequence belongs to the glycosyl hydrolase 13 family. GlgB subfamily. As to quaternary structure, monomer.

The catalysed reaction is Transfers a segment of a (1-&gt;4)-alpha-D-glucan chain to a primary hydroxy group in a similar glucan chain.. Its pathway is glycan biosynthesis; glycogen biosynthesis. In terms of biological role, catalyzes the formation of the alpha-1,6-glucosidic linkages in glycogen by scission of a 1,4-alpha-linked oligosaccharide from growing alpha-1,4-glucan chains and the subsequent attachment of the oligosaccharide to the alpha-1,6 position. The sequence is that of 1,4-alpha-glucan branching enzyme GlgB from Chlamydia muridarum (strain MoPn / Nigg).